The following is a 279-amino-acid chain: MTKQIIVTDSTSDLSKEYLEANNIHVIPLSLTIEGASYVDQVDITSEEFINHIENDEDVKTSQPAIGEFISAYEELGKDGSEIISIHLSSGLSGTYNTAYQASQMVDANVTVIDSKSISFGLGYQIQHLVELVKEGVSTSEIVKKLNHLRENIKLFVVIGQLNQLIKGGRISKTKGLIGNLMKIKPIGTLDDGRLELVHNARTQNSSIQYLKKEIAEFIGDHEIKSIGVAHANVIEYVDKLKKVFNEAFHVNNYDINVTTPVISAHTGQGAIGLVVLKK.

The region spanning Q4–K278 is the DegV domain. The hexadecanoate site is built by T61 and S93.

Functionally, may bind long-chain fatty acids, such as palmitate, and may play a role in lipid transport or fatty acid metabolism. The chain is DegV domain-containing protein SACOL1460 from Staphylococcus aureus (strain COL).